Here is a 962-residue protein sequence, read N- to C-terminus: MSESVTTGSDDDGGDRESSPVMLSQSFDPMSSSSNSSSEENSDDDYEKTISSKKRHPRPNSKGVNVKRSRRNAIVEEDPQEEIFNNLFAFLLDQKVDTMDIAVSWFADYAKDNQSALANLINFILKCCGCNRAINVFDVQDQDSASATLSQIQLSVERTSTRDYPLNSKNLKFRNFRKRLTGLLSNFVSQLSIRNYLYNSTVFEDIMSWVVAMSSSTMRPIRHTATVFCLNIMTFLCEKSKELLNEHAIATKQLEKEEKRSRVNRNRINELNNSLGEIVKQQDTLTTYLNDYFDSVFVHRYRDVEPKIRVDCLQELGVWINTVPSIFFSGSYLRYLGWMLSDINTTVRLTVVKVLRKFFETDSFIGGLRHFSSRFKERILEMSCVDADIGVRVASIRLCNAMRTCGFLENSEILKVLKLILDINPRVQREAVLFLCKVVDESVNEKIDLWGEEDYILKAFSQTSLTTFSVHWIKFSQMCKLLEEVRLSYQSSFDYDTLLRIFQKNGNFITPITQALLNACEIDSIYQSWEDISNFVLFDNYTSTLKDPIDSILSFCKLNDFQESILLQLLSASIQTVCNNNFITPKTVHNKQAAETTNDQNKDKDLLYLNLLPYINSITERNSASPTLLHDSLRLLFSMDLTEMTDPQLSRHFELLINNLKKFFLTNNDLQIIQGCTILFLRLDSIPALKEDLKLLVTDICDQTVTEFLKNFGSFNIQDAVITKDEFVIFEACLTRIEGCTSLKDFSDYPEFDIIYERLVSLLSRVPNSYEDTLKFSAINTLQSLLFWFFLRKDNPADEEKKKDDETKVFNCLINIMNNDSSKILQLQAARTFLETVIMKEGVKASHYNDDNRVSEEHNFLKPQFLDALLKILEGWLYTYAKVGQFPFKRLTQASSPHTQISLDKNPLNRRLLEHVCCDLTSKLLIVVSLSNTITPEFSQQFCELRGHYGPKLSAIVDEFLN.

The segment at 1–72 (MSESVTTGSD…GVNVKRSRRN (72 aa)) is disordered. Residues 21–30 (VMLSQSFDPM) show a composition bias toward polar residues. Residues 51-71 (SSKKRHPRPNSKGVNVKRSRR) show a composition bias toward basic residues. Residues 236 to 275 (LCEKSKELLNEHAIATKQLEKEEKRSRVNRNRINELNNSL) adopt a coiled-coil conformation. An SCD domain is found at 297–382 (FVHRYRDVEP…SRFKERILEM (86 aa)).

The protein belongs to the SCC3 family. Cohesin complexes are composed of the psm1/smc1 and psm3/smc3 heterodimer attached via their hinge domain, rad21/scc1 which link them, and psc3/scc3, which interacts with rad21. Interacts with swi6. The interaction with swi6 may contribute to recruit cohesin complex to heterochromatin.

It is found in the nucleus. The protein resides in the chromosome. The protein localises to the centromere. Component of cohesin complex, a complex required for the cohesion of sister chromatids after DNA replication. The cohesin complex apparently forms a large proteinaceous ring within which sister chromatids can be trapped. At anaphase, the rad21 subunit of the cohesin complex is cleaved and dissociates from chromatin, allowing sister chromatids to segregate. The cohesin complex may also play a role in spindle pole assembly during mitosis. This is Cohesin subunit psc3 (psc3) from Schizosaccharomyces pombe (strain 972 / ATCC 24843) (Fission yeast).